Here is a 222-residue protein sequence, read N- to C-terminus: Histidinol-phosphatase (222 aa).

Asp8 serves as the catalytic Nucleophile. Residues Asp8, Asp10, and Asp184 each contribute to the Mg(2+) site. Asp10 serves as the catalytic Proton donor.

The protein belongs to the HAD-like hydrolase superfamily. SerB family. Requires Mg(2+) as cofactor.

The enzyme catalyses L-histidinol phosphate + H2O = L-histidinol + phosphate. It functions in the pathway amino-acid biosynthesis; L-histidine biosynthesis; L-histidine from 5-phospho-alpha-D-ribose 1-diphosphate: step 8/9. Its function is as follows. Catalyzes the dephosphorylation of histidinol-phosphate to histidinol, the direct precursor of histidine. The polypeptide is Histidinol-phosphatase (Neisseria meningitidis serogroup C (strain 8013)).